The primary structure comprises 205 residues: MIGKLKGVIDSYGEDYVILDVGGVGYQVHCASRTLQALPSPGQAAVLSIETYVREDQIKLFGFRTDHEREWFRLLQTVQGVGARVALAVLGTLSPADLASAIALRDKASVARTPGIGPKVAERIVTELKDKAPSFANVDPTVVHLAGDLDDQRAPRPVRDAISALVNLGYGQPQATAAIAAASRGAGENAETAQLIRLGLKELSK.

Positions 1–64 (MIGKLKGVID…EDQIKLFGFR (64 aa)) are domain I. Positions 65–143 (TDHEREWFRL…SFANVDPTVV (79 aa)) are domain II. The segment at 144–154 (HLAGDLDDQRA) is flexible linker. The interval 154 to 205 (APRPVRDAISALVNLGYGQPQATAAIAAASRGAGENAETAQLIRLGLKELSK) is domain III.

Belongs to the RuvA family. In terms of assembly, homotetramer. Forms an RuvA(8)-RuvB(12)-Holliday junction (HJ) complex. HJ DNA is sandwiched between 2 RuvA tetramers; dsDNA enters through RuvA and exits via RuvB. An RuvB hexamer assembles on each DNA strand where it exits the tetramer. Each RuvB hexamer is contacted by two RuvA subunits (via domain III) on 2 adjacent RuvB subunits; this complex drives branch migration. In the full resolvosome a probable DNA-RuvA(4)-RuvB(12)-RuvC(2) complex forms which resolves the HJ.

Its subcellular location is the cytoplasm. The RuvA-RuvB-RuvC complex processes Holliday junction (HJ) DNA during genetic recombination and DNA repair, while the RuvA-RuvB complex plays an important role in the rescue of blocked DNA replication forks via replication fork reversal (RFR). RuvA specifically binds to HJ cruciform DNA, conferring on it an open structure. The RuvB hexamer acts as an ATP-dependent pump, pulling dsDNA into and through the RuvAB complex. HJ branch migration allows RuvC to scan DNA until it finds its consensus sequence, where it cleaves and resolves the cruciform DNA. The protein is Holliday junction branch migration complex subunit RuvA of Nitrobacter winogradskyi (strain ATCC 25391 / DSM 10237 / CIP 104748 / NCIMB 11846 / Nb-255).